A 240-amino-acid chain; its full sequence is MNPEKFILELSKHNFVLTDKQKEQFKLYFKFLIEVNEHVNLTRITEENEVYLKHFYDSITPLFVFGDVFKDGATLCDVGAGAGFPSIPLKILKPSLKVTIVDSLAKRLTFLKDLIAKLGLDNVELVHGRAEDVGQNKLYREKFDIVTARAVAKMSVLSEYCLPLVKKDGYFVALKGPKAEDELDEGKKALAVLGGKLIKDEELTLPGTTEERTLVLVKKVKETSKKYPRQAGTPRRKPIC.

S-adenosyl-L-methionine-binding positions include Gly79, Phe84, 130 to 131, and Arg149; that span reads AE.

It belongs to the methyltransferase superfamily. RNA methyltransferase RsmG family.

It localises to the cytoplasm. Functionally, specifically methylates the N7 position of a guanine in 16S rRNA. In Lactobacillus helveticus (strain DPC 4571), this protein is Ribosomal RNA small subunit methyltransferase G.